A 258-amino-acid chain; its full sequence is Phosphate import ATP-binding protein PstB (258 aa).

The 249-residue stretch at Leu5 to Ile253 folds into the ABC transporter domain. Gly37–Ser44 serves as a coordination point for ATP.

It belongs to the ABC transporter superfamily. Phosphate importer (TC 3.A.1.7) family. As to quaternary structure, the complex is composed of two ATP-binding proteins (PstB), two transmembrane proteins (PstC and PstA) and a solute-binding protein (PstS).

The protein localises to the cell membrane. The enzyme catalyses phosphate(out) + ATP + H2O = ADP + 2 phosphate(in) + H(+). Functionally, part of the ABC transporter complex PstSACB involved in phosphate import. Responsible for energy coupling to the transport system. The chain is Phosphate import ATP-binding protein PstB from Corynebacterium jeikeium (strain K411).